We begin with the raw amino-acid sequence, 85 residues long: MKVTLIAILTCAAVLVLHTTAEEELEAESQLMEVGMPDTELAAVDEERLFECSVSCEIEKEGNKDCKKKKCKGGWKCKFNMCVKV.

An N-terminal signal peptide occupies residues 1–22 (MKVTLIAILTCAAVLVLHTTAE). Residues 23–48 (EELEAESQLMEVGMPDTELAAVDEER) constitute a propeptide that is removed on maturation. Intrachain disulfides connect cysteine 52–cysteine 66, cysteine 56–cysteine 77, and cysteine 71–cysteine 82.

This sequence belongs to the neurotoxin 12 (Hwtx-2) family. 02 (Hwtx-2) subfamily. Monomer. Expressed by the venom gland.

It localises to the secreted. Functionally, neurotoxin active on both insects and mammals. This Cyriopagopus hainanus (Chinese bird spider) protein is U4-theraphotoxin-Hhn1a.